The primary structure comprises 186 residues: Tegument protein UL55 (186 aa).

The protein belongs to the alphaherpesvirinae HHV-1 UL55 family.

Its subcellular location is the virion tegument. The protein localises to the host nucleus matrix. The polypeptide is Tegument protein UL55 (Human herpesvirus 2 (strain HG52) (HHV-2)).